The sequence spans 467 residues: Cytochrome P450 monooxygenase azaI (467 aa).

A signal peptide spans 1–28 (MESLAQLPGIFLPLAGCVLALSLSALLA). A heme-binding site is contributed by cysteine 411.

Belongs to the cytochrome P450 family. Heme serves as cofactor.

Its pathway is secondary metabolite biosynthesis. Cytochrome P450 monooxygenase; part of the gene cluster that mediates the biosynthesis of azaphilones, a class of fungal metabolites characterized by a highly oxygenated pyrano-quinone bicyclic core and exhibiting a broad range of bioactivities. In the first step, the non-reducing polyketide synthase azaA forms the hexaketide precursor from successive condensations of five malonyl-CoA units, presumably with a simple acetyl-CoA starter unit. The reactive polyketide chain then undergoes a PT-mediated C2-C7 cyclization to afford the aromatic ring and is eventually released as an aldehyde through the R-domain. The putative ketoreductase azaE is proposed to catalyze the reduction of the terminal ketone resulting in the early culture product FK17-P2a. The monooxygenase azaH was demonstrated to be the only enzyme required to convert FK17-P2a to azanigerone E. AzaH first hydroxylates the benzaldehyde intermediate FK17-P2a at C4, which triggers the formation of the pyran-ring to afford azanigerone E. In parallel, the 2,4-dimethylhexanoyl chain is synthesized by the HR-PKS azaB and is proposed to be transferred to the C4-hydroxyl of azanigerone E by the acyltransferase azaD directly from the ACP domain of azaB. Alternatively, the 2,4-dimethyl-hexanoyl chain may be offloaded from the HR-PKS as a carboxylic acid and converted to an acyl-CoA by azaF. The resulting acyl-CoA molecule could then be taken up as a substrate by AzaD to form azanigerone B. To yield the carboxylic acid substituent in azanigerone A, the hydroxypropyl side chain of azanigerone B would need to undergo a C-C oxidative cleavage catalyzed by cytochrome P450 AzaI. AzaI is proposed to act on a vicinal diol that leads to a C-C bond scission either through an alkoxyradical intermediate or a peroxy complex. In the biosynthesis of azanigerone A, azanigerone B first undergoes hydroxylation at C10, possibly catalyzed by one of the two FAD-dependent monooxygenases encoded in the cluster, azaG or azaL, resulting in the vicinal diol azanigerone C. Oxidative cleavage of azanigerone C by azaI would yield the corresponding aldehyde derivative of azanigerone A. Finally, the dehydrogenase azaJ is proposed to convert the aldehyde functional group into the carboxylic acid, completing the conversion from azanigerone B to azanigerone A. Alternatively, the oxidation of aldehyde to carboxylic acid may be catalyzed by the same P450 enzyme azaI via consecutive oxidation or by endogenous alcohol dehydrogenase. The chain is Cytochrome P450 monooxygenase azaI from Aspergillus niger (strain ATCC 1015 / CBS 113.46 / FGSC A1144 / LSHB Ac4 / NCTC 3858a / NRRL 328 / USDA 3528.7).